The sequence spans 150 residues: Large ribosomal subunit protein bL9 (150 aa).

The protein belongs to the bacterial ribosomal protein bL9 family.

Its function is as follows. Binds to the 23S rRNA. The protein is Large ribosomal subunit protein bL9 of Lactococcus lactis subsp. cremoris (strain SK11).